Here is a 603-residue protein sequence, read N- to C-terminus: Ankyrin repeat and LEM domain-containing protein 2 homolog (603 aa).

Residues 2 to 22 form a helical; Signal-anchor for type III membrane protein membrane-spanning segment; the sequence is GRKSAILAVILAIIYFRSNFS. ANK repeat units lie at residues 161–190 and 221–250; these read FRYN…NIDF and NSDT…TDRT. Disordered regions lie at residues 446-465 and 505-538; these read ISEN…DDDD and LPPP…PPPT. A compositionally biased stretch (acidic residues) spans 456 to 465; that stretch reads DSADDEDDDD.

Belongs to the ANKLE2 family. In terms of assembly, interacts with baf-1. Interacts with protein phosphatase 2A (PP2A) components.

The protein resides in the nucleus membrane. Functionally, involved in mitotic nuclear envelope reassembly by promoting dephosphorylation of baf-1 during mitotic exit. Coordinates the control of baf-1 dephosphorylation by inhibiting VRK1 kinase and promoting dephosphorylation of baf-1 by protein phosphatase 2A (PP2A), thereby facilitating nuclear envelope assembly. It is unclear whether it acts as a real PP2A regulatory subunit or whether it is involved in recruitment of the PP2A complex. This is Ankyrin repeat and LEM domain-containing protein 2 homolog (lem-4) from Caenorhabditis elegans.